We begin with the raw amino-acid sequence, 486 residues long: NGFI-A-binding protein 1 (486 aa).

The tract at residues 4–82 (ALPRTLGELQ…RDWVTNPGLF (79 aa)) is NCD1. Residues Lys126, Lys129, and Lys143 each participate in a glycyl lysine isopeptide (Lys-Gly) (interchain with G-Cter in SUMO2) cross-link. The segment at 160-187 (WQGHHATESEHSLSPADLGSPASPKESS) is disordered. 2 positions are modified to phosphoserine: Ser171 and Ser182. Lys211 is covalently cross-linked (Glycyl lysine isopeptide (Lys-Gly) (interchain with G-Cter in SUMO2)). Residues 220–309 (LLKNNKKLAK…ARQVSREVTY (90 aa)) form an NCD2 region. The interval 306–337 (EVTYKYTYRTTRLKCGERDELSPKRIKIEDGF) is necessary for nuclear localization. At Ser327 the chain carries Phosphoserine. A Glycyl lysine isopeptide (Lys-Gly) (interchain with G-Cter in SUMO1); alternate cross-link involves residue Lys332. Lys332 is covalently cross-linked (Glycyl lysine isopeptide (Lys-Gly) (interchain with G-Cter in SUMO2); alternate). Residues Lys354, Lys368, and Lys372 each participate in a glycyl lysine isopeptide (Lys-Gly) (interchain with G-Cter in SUMO2) cross-link. A disordered region spans residues 398–438 (RQSSGEQSPDGGLPSDSSDGQGERPLNLRIPSVQNRQPHHF). The span at 404 to 417 (QSPDGGLPSDSSDG) shows a compositional bias: low complexity. Position 405 is a phosphoserine (Ser405). Glycyl lysine isopeptide (Lys-Gly) (interchain with G-Cter in SUMO2) cross-links involve residues Lys453, Lys464, and Lys476. A Glycyl lysine isopeptide (Lys-Gly) (interchain with G-Cter in SUMO1); alternate cross-link involves residue Lys479. Lys479 is covalently cross-linked (Glycyl lysine isopeptide (Lys-Gly) (interchain with G-Cter in SUMO2); alternate).

The protein belongs to the NAB family. In terms of assembly, homomultimers may associate with EGR1 bound to DNA. Widely expressed in adult. In day 16 embryo highest levels in forebrain, thymus, salivary gland and cartilage.

It localises to the nucleus. In terms of biological role, acts as a transcriptional repressor for zinc finger transcription factors EGR1 and EGR2. This chain is NGFI-A-binding protein 1 (Nab1), found in Mus musculus (Mouse).